The following is a 163-amino-acid chain: Putative pre-16S rRNA nuclease (163 aa).

The protein belongs to the YqgF nuclease family.

It is found in the cytoplasm. Could be a nuclease involved in processing of the 5'-end of pre-16S rRNA. The protein is Putative pre-16S rRNA nuclease of Nitrobacter winogradskyi (strain ATCC 25391 / DSM 10237 / CIP 104748 / NCIMB 11846 / Nb-255).